The following is a 425-amino-acid chain: [Pyruvate dehydrogenase (acetyl-transferring)] kinase, mitochondrial (425 aa).

A Phosphohistidine; by autocatalysis modification is found at histidine 178. In terms of domain architecture, Histidine kinase spans 180–418 (NVAVEIALDI…DVYIHLNRLC (239 aa)). ATP contacts are provided by residues 296 to 303 (EILKNSLR), aspartate 336, 355 to 356 (TT), and 379 to 384 (GFGFGL).

It belongs to the PDK/BCKDK protein kinase family.

The protein resides in the mitochondrion matrix. The catalysed reaction is L-seryl-[pyruvate dehydrogenase E1 alpha subunit] + ATP = O-phospho-L-seryl-[pyruvate dehydrogenase E1 alpha subunit] + ADP + H(+). Its function is as follows. Inhibits the mitochondrial pyruvate dehydrogenase complex by phosphorylation of the E1 alpha subunit, thus contributing to the regulation of glucose metabolism. In Schizosaccharomyces pombe (strain 972 / ATCC 24843) (Fission yeast), this protein is [Pyruvate dehydrogenase (acetyl-transferring)] kinase, mitochondrial (pkp1).